A 208-amino-acid chain; its full sequence is FMN-dependent NADH:quinone oxidoreductase (208 aa).

FMN-binding positions include 17–19, 99–102, and 143–146; these read SNS, MWNL, and SRGG.

Belongs to the azoreductase type 1 family. In terms of assembly, homodimer. Requires FMN as cofactor.

The catalysed reaction is 2 a quinone + NADH + H(+) = 2 a 1,4-benzosemiquinone + NAD(+). It carries out the reaction N,N-dimethyl-1,4-phenylenediamine + anthranilate + 2 NAD(+) = 2-(4-dimethylaminophenyl)diazenylbenzoate + 2 NADH + 2 H(+). Quinone reductase that provides resistance to thiol-specific stress caused by electrophilic quinones. Its function is as follows. Also exhibits azoreductase activity. Catalyzes the reductive cleavage of the azo bond in aromatic azo compounds to the corresponding amines. This is FMN-dependent NADH:quinone oxidoreductase from Staphylococcus aureus (strain MSSA476).